Consider the following 296-residue polypeptide: Endonuclease 5 (296 aa).

A signal peptide spans 1-20; the sequence is MRLWIVSVLVLTHLVHGALC. 2 residues coordinate a divalent metal cation: Trp21 and His26. 21 to 26 serves as a coordination point for substrate; that stretch reads WGKDGH. A disulfide bridge connects residues Cys30 and Cys62. Residues Asp66 and His81 each contribute to the a divalent metal cation site. Substrate-binding positions include 66-72, 81-84, and 91-96; these read DEIKKLS, HYVN, and NYEYCR. 3 disulfides stabilise this stretch: Cys90-Cys243, Cys98-Cys108, and Cys223-Cys230. 2 residues coordinate substrate: Asn115 and Tyr133. Asn115 carries an N-linked (GlcNAc...) asparagine glycan. N-linked (GlcNAc...) asparagine glycosylation is present at Asn134. A divalent metal cation contacts are provided by His144, Asp148, and His154. Residues 144–193 are substrate binding; that stretch reads HYMGDVHQPLHTGFLGDLGGNTIIVNWYHNKSNLHHVWDNMIIDSALETY. Asn173 is a glycosylation site (N-linked (GlcNAc...) asparagine). Residues His178 and Asp182 each coordinate a divalent metal cation. Asn195 carries an N-linked (GlcNAc...) asparagine glycan. A propeptide spans 281–296 (removed in mature form); sequence ATLNRIFSAKPKLAGL.

Belongs to the nuclease type I family. Monomer. It depends on Zn(2+) as a cofactor.

The enzyme catalyses Endonucleolytic cleavage to 5'-phosphomononucleotide and 5'-phosphooligonucleotide end-products.. In terms of biological role, hydrolyzes, with low efficiency, only single-stranded DNA and RNA without apparent specificity for bases. Endonuclease that recognizes and cleaves some mismatches with high efficiency, including heteroduplex double-stranded DNA; mostly efficient on T/G, A/G and G/G mismatches, less efficient for T/T and poorly efficient for C/C, A/A, T/C and A/C. The sequence is that of Endonuclease 5 from Arabidopsis thaliana (Mouse-ear cress).